Reading from the N-terminus, the 257-residue chain is MLVVISPAKTLDFNNINETLPMTNPKFLKEAKILVEELKNYDSYSLGKLMKTSDKLSLLNKNRFDIWNESFDNSRQCLIAFKGEVFKGMDVGSFNIEDLFYTNDHLRILSGLYGVLNPFDGVNPYRLEMGTKLSFNNYKNLYDYWKDKLKYKLIEDIKSTGNNTLVNLASYEYFKSIEGIDILDTSINIVTPIFKEYRNGKYKIVTMKAKKARGLMVSFIMKNKINNIEDLKKFDLEGYLYNEDLSNNNNLVFTLEN.

It belongs to the UPF0246 family.

The sequence is that of UPF0246 protein CLL_A2361 from Clostridium botulinum (strain Eklund 17B / Type B).